The sequence spans 353 residues: Uroporphyrinogen decarboxylase (353 aa).

Substrate contacts are provided by residues 26–30 (RQAGR), Asp-76, Tyr-153, Thr-208, and His-326.

Belongs to the uroporphyrinogen decarboxylase family. Homodimer.

It localises to the cytoplasm. The catalysed reaction is uroporphyrinogen III + 4 H(+) = coproporphyrinogen III + 4 CO2. Its pathway is porphyrin-containing compound metabolism; protoporphyrin-IX biosynthesis; coproporphyrinogen-III from 5-aminolevulinate: step 4/4. Its function is as follows. Catalyzes the decarboxylation of four acetate groups of uroporphyrinogen-III to yield coproporphyrinogen-III. The polypeptide is Uroporphyrinogen decarboxylase (Chromohalobacter salexigens (strain ATCC BAA-138 / DSM 3043 / CIP 106854 / NCIMB 13768 / 1H11)).